Here is a 164-residue protein sequence, read N- to C-terminus: MATKVSQIATTKVYVVKPNVTIAEAAKEMKEHNLGSLVVIDSQNRVVGIITERDIVKAASNRDIDSPVEKYMTKDVKGVTEDTEVTDALDIMLNNGFRHLPIIKSNGKLYGIVSIRDLARALLDVHTMQFGKPAEEVKGTGVICPVCGMEIDEYGYCGCGTGSG.

CBS domains lie at 9–66 (ATTK…DIDS) and 72–128 (MTKD…VHTM).

This is an uncharacterized protein from Acidianus ambivalens (Desulfurolobus ambivalens).